The primary structure comprises 503 residues: Putative FBD-associated F-box protein At5g56410 (503 aa).

In terms of domain architecture, F-box spans 2–50; that stretch reads DKITGFSDDELLVKILSFLPTKAAVTTSILSKQWKFLWMRLPKLEYHDD. The FBD domain maps to 361–412; sequence FWEQMITSVPQCLLSSLQTFKWLGNGDSIEGKDLATFILRNSCQLKTATISI.

This is Putative FBD-associated F-box protein At5g56410 from Arabidopsis thaliana (Mouse-ear cress).